We begin with the raw amino-acid sequence, 467 residues long: Rhamnulokinase (467 aa).

11–15 (ASSGR) contributes to the ATP binding site. Substrate is bound by residues A78 and 235–237 (HDT). The active-site Proton acceptor is D236. T257 lines the ATP pocket. Substrate is bound at residue N294. Position 302 (Q302) interacts with ATP. The cysteines at positions 351 and 368 are disulfide-linked. G400 contributes to the ATP binding site.

Belongs to the rhamnulokinase family. Mg(2+) serves as cofactor.

It carries out the reaction L-rhamnulose + ATP = L-rhamnulose 1-phosphate + ADP + H(+). It participates in carbohydrate degradation; L-rhamnose degradation; glycerone phosphate from L-rhamnose: step 2/3. In terms of biological role, involved in the catabolism of L-rhamnose (6-deoxy-L-mannose). Catalyzes the transfer of the gamma-phosphate group from ATP to the 1-hydroxyl group of L-rhamnulose to yield L-rhamnulose 1-phosphate. This chain is Rhamnulokinase, found in Halalkalibacterium halodurans (strain ATCC BAA-125 / DSM 18197 / FERM 7344 / JCM 9153 / C-125) (Bacillus halodurans).